A 152-amino-acid polypeptide reads, in one-letter code: Nucleoside diphosphate kinase (152 aa).

Residues Lys11, Phe59, Arg87, Thr93, Arg104, and Asn114 each coordinate ATP. His117 functions as the Pros-phosphohistidine intermediate in the catalytic mechanism.

The protein belongs to the NDK family. As to quaternary structure, homotetramer. Mg(2+) serves as cofactor.

The protein resides in the cytoplasm. It carries out the reaction a 2'-deoxyribonucleoside 5'-diphosphate + ATP = a 2'-deoxyribonucleoside 5'-triphosphate + ADP. The catalysed reaction is a ribonucleoside 5'-diphosphate + ATP = a ribonucleoside 5'-triphosphate + ADP. Its function is as follows. Major role in the synthesis of nucleoside triphosphates other than ATP. The ATP gamma phosphate is transferred to the NDP beta phosphate via a ping-pong mechanism, using a phosphorylated active-site intermediate. This is Nucleoside diphosphate kinase from Prochlorococcus marinus (strain MIT 9301).